The primary structure comprises 1543 residues: ATP-binding cassette sub-family C member 2 (1543 aa).

Topologically, residues 1–26 (MDEFCNSTFWNLSLLKSPEADLPLCF) are extracellular. N-linked (GlcNAc...) asparagine glycosylation is found at asparagine 6 and asparagine 11. The helical transmembrane segment at 27-47 (EQTVLVWIPLGFLWLLAPWQL) threads the bilayer. Residues 48 to 67 (YRIYRSRTKRFAITKFYLAK) are Cytoplasmic-facing. The chain crosses the membrane as a helical span at residues 68–88 (QVFVVCLLILAAIDLSLALTE). Over 89 to 92 (DTGQ) the chain is Extracellular. The chain crosses the membrane as a helical span at residues 93 to 113 (ATIPPVKYTNPILYLCTWLLV). The Cytoplasmic portion of the chain corresponds to 114-125 (LVIQHCRQCCIQ). Residues 126-146 (KNSWFLSMFWILSLLCGIFQF) form a helical membrane-spanning segment. Residues 147–164 (QTLIRALLQDSKSNMTYS) lie on the Extracellular side of the membrane. The N-linked (GlcNAc...) asparagine glycan is linked to asparagine 160. A helical transmembrane segment spans residues 165–185 (CLFFVSYGFQIVILILSAFSE). Residues 186 to 311 (SSDSTHAPSA…DFPKSWLVKA (126 aa)) are Cytoplasmic-facing. A disordered region spans residues 260-285 (LKKSQQSPEGTSHGLTKKQSQSQDVL). The span at 263 to 283 (SQQSPEGTSHGLTKKQSQSQD) shows a compositional bias: polar residues. A phosphoserine mark is found at serine 279 and serine 281. The helical transmembrane segment at 312–332 (LFKTFYVVILKSFILKLAHDI) threads the bilayer. Residues 320–603 (ILKSFILKLA…LPMVISSVIQ (284 aa)) enclose the ABC transmembrane type-1 1 domain. Topologically, residues 333–358 (LLFLNPQLLKFLIGFVKDPDSYPWVG) are extracellular. A helical transmembrane segment spans residues 359–379 (YIYAILMFSVTLIQSFFLQCY). Residues 380-435 (FQFCFVLGMTVRTTIIASVYKKALTLSNLARRQYTIGETVNLMSVDSQKLMDVTNY) lie on the Cytoplasmic side of the membrane. A helical membrane pass occupies residues 436–456 (IHLLWSSVLQIALSIFFLWRE). The Extracellular segment spans residues 457–459 (LGP). A helical membrane pass occupies residues 460 to 480 (SILAGVGLMVLLVPVNGVLAT). Residues 481-542 (KIRKIQVQNM…NLLRFSQLQT (62 aa)) are Cytoplasmic-facing. A helical transmembrane segment spans residues 543-563 (ILIFILHLTPTLVSVITFSVY). The Extracellular portion of the chain corresponds to 564 to 585 (VLVDSQNVLNAEKAFTSITLFN). Residues 586–606 (ILRFPLAMLPMVISSVIQASV) traverse the membrane as a helical segment. Residues 607 to 969 (SVDRLEQYLG…VKFSIYLKYL (363 aa)) lie on the Cytoplasmic side of the membrane. The ABC transporter 1 domain maps to 635–859 (VQFSEASFTW…KGVFAKNWKT (225 aa)). An ATP-binding site is contributed by 669–676 (GTVGSGKS). At serine 876 the chain carries Phosphoserine. Residues 903–927 (RENSLRRTLSRSSRSGSRRGKSLKS) form a disordered region. The span at 908–917 (RRTLSRSSRS) shows a compositional bias: low complexity. Phosphoserine occurs at positions 924 and 928. Residues 970–990 (QAVGWWSLLFIVIFYVLNYVA) form a helical membrane-spanning segment. One can recognise an ABC transmembrane type-1 2 domain in the interval 977–1262 (LLFIVIFYVL…LVRMTSEVET (286 aa)). Topologically, residues 991–1031 (FIGTNLWLSAWTSDSEKQNGTDNSPSQRDMRIGVFGALGIA) are extracellular. An N-linked (GlcNAc...) asparagine glycan is attached at asparagine 1009. A helical membrane pass occupies residues 1032–1052 (QGIFLLSSSLWSIYACRNASK). The Cytoplasmic segment spans residues 1053–1095 (TLHRQLLTNILRAPMSFFDTTPTGRIVNRFAGDISTVDDTLPQ). The helical transmembrane segment at 1096–1116 (TLRSWLLCFFGIVSTLVMICM) threads the bilayer. Alanine 1117 is a topological domain (extracellular). A helical transmembrane segment spans residues 1118-1138 (TPIFIIIIIPLSILYVSVQVF). Over 1139-1209 (YVATSRQLRR…TSNRWLAIRL (71 aa)) the chain is Cytoplasmic. The helical transmembrane segment at 1210 to 1230 (ELVGNLIVFCSALLLVIYKNS) threads the bilayer. At 1231–1232 (LT) the chain is on the extracellular side. Residues 1233-1253 (GDTVGFVLSNALNITQTLNWL) traverse the membrane as a helical segment. Residues 1254 to 1543 (VRMTSEVETN…GIESVNHTEL (290 aa)) are Cytoplasmic-facing. In terms of domain architecture, ABC transporter 2 spans 1298–1532 (IQFNNYQVRY…MGPFYLMAKE (235 aa)). 1332–1339 (GRTGAGKS) lines the ATP pocket. The residue at position 1436 (serine 1436) is a Phosphoserine.

This sequence belongs to the ABC transporter superfamily. ABCC family. Conjugate transporter (TC 3.A.1.208) subfamily. As to expression, expressed in liver.

The protein localises to the apical cell membrane. It carries out the reaction an S-substituted glutathione(in) + ATP + H2O = an S-substituted glutathione(out) + ADP + phosphate + H(+). The enzyme catalyses taurolithocholate 3-sulfate(in) + ATP + H2O = taurolithocholate 3-sulfate(out) + ADP + phosphate + H(+). The catalysed reaction is ATP + H2O + xenobioticSide 1 = ADP + phosphate + xenobioticSide 2.. It catalyses the reaction leukotriene C4(in) + ATP + H2O = leukotriene C4(out) + ADP + phosphate + H(+). It carries out the reaction 17beta-estradiol 17-O-(beta-D-glucuronate)(in) + ATP + H2O = 17beta-estradiol 17-O-(beta-D-glucuronate)(out) + ADP + phosphate + H(+). The enzyme catalyses (4Z,15Z)-bilirubin IXalpha C8-beta-D-glucuronoside(in) + ATP + H2O = (4Z,15Z)-bilirubin IXalpha C8-beta-D-glucuronoside(out) + ADP + phosphate + H(+). The catalysed reaction is (4Z,15Z)-bilirubin IXalpha C8,C12-beta-D-bisglucuronoside(in) + ATP + H2O = (4Z,15Z)-bilirubin IXalpha C8,C12-beta-D-bisglucuronoside(out) + ADP + phosphate + H(+). ATP-dependent transporter of the ATP-binding cassette (ABC) family that binds and hydrolyzes ATP to enable active transport of various substrates including many drugs, toxicants and endogenous compound across cell membranes. Transports a wide variety of conjugated organic anions such as sulfate-, glucuronide- and glutathione (GSH)-conjugates of endo- and xenobiotics substrates. Mediates hepatobiliary excretion of mono- and bis-glucuronidated bilirubin molecules and therefore play an important role in bilirubin detoxification. Mediates also hepatobiliary excretion of others glucuronide conjugates such as 17beta-estradiol 17-glucosiduronic acid and leukotriene C4. Transports sulfated bile salt such as taurolithocholate sulfate. Transports various anticancer drugs, such as anthracycline, vinca alkaloid and methotrexate and HIV-drugs such as protease inhibitors. The polypeptide is ATP-binding cassette sub-family C member 2 (Mus musculus (Mouse)).